The primary structure comprises 109 residues: Mitochondrial pyruvate carrier 2 (109 aa).

A run of 3 helical transmembrane segments spans residues 19–35 (IHFWAPTFKWGISIANI), 51–67 (IAVTCTGMIWCRCSTII), and 74–90 (LFSVNVAMAATGIYQLT).

It belongs to the mitochondrial pyruvate carrier (MPC) (TC 2.A.105) family.

Its subcellular location is the mitochondrion inner membrane. Mediates the uptake of pyruvate into mitochondria. The sequence is that of Mitochondrial pyruvate carrier 2 from Arabidopsis thaliana (Mouse-ear cress).